Here is a 233-residue protein sequence, read N- to C-terminus: Large ribosomal subunit protein bL19c (233 aa).

The transit peptide at 1 to 77 (MASKVLPQAL…FPARNSFVVR (77 aa)) directs the protein to the chloroplast.

In terms of assembly, component of the chloroplast large ribosomal subunit (LSU). Mature 70S chloroplast ribosomes of higher plants consist of a small (30S) and a large (50S) subunit. The 30S small subunit contains 1 molecule of ribosomal RNA (16S rRNA) and 24 different proteins. The 50S large subunit contains 3 rRNA molecules (23S, 5S and 4.5S rRNA) and 33 different proteins.

It localises to the plastid. It is found in the chloroplast. Functionally, component of the chloroplast ribosome (chloro-ribosome), a dedicated translation machinery responsible for the synthesis of chloroplast genome-encoded proteins, including proteins of the transcription and translation machinery and components of the photosynthetic apparatus. The protein is Large ribosomal subunit protein bL19c (RPL19) of Spinacia oleracea (Spinach).